The primary structure comprises 250 residues: MGNLRVDVITLFPEMFSAITEYGITSRAVKQGLLQVICWNPRDYTTDRHHTVDDRPFGGGPGMVMKIKPLEDALVSARQATGAAAKVIYLSPQGRKLTQQAVKGLAEQESLILIAGRYEGIDERFIEAHVDEEWSIGDYVLSGGELPAMVLIDAVTRLLPGALGHVDSAEEDSFTDGLLDCPHYTRPEVYADQRVPDVLLSGNHAHIRRWRMKQSLGRTFERRADLLESRSLSGEEKKLLEEYLRERDDS.

Residues G116 and 136 to 141 each bind S-adenosyl-L-methionine; that span reads IGDYVL.

This sequence belongs to the RNA methyltransferase TrmD family. Homodimer.

It is found in the cytoplasm. The catalysed reaction is guanosine(37) in tRNA + S-adenosyl-L-methionine = N(1)-methylguanosine(37) in tRNA + S-adenosyl-L-homocysteine + H(+). Specifically methylates guanosine-37 in various tRNAs. The polypeptide is tRNA (guanine-N(1)-)-methyltransferase (Pseudomonas putida (strain ATCC 700007 / DSM 6899 / JCM 31910 / BCRC 17059 / LMG 24140 / F1)).